Consider the following 471-residue polypeptide: GTPase Der (471 aa).

EngA-type G domains are found at residues 5–168 (PVIA…TDLE) and 186–359 (IRVA…DSAF). GTP contacts are provided by residues 11-18 (GRPNVGKS), 58-62 (DTGGI), 120-123 (NKTD), 192-199 (GRPNVGKS), 239-243 (DTAGV), and 304-307 (NKWD). The 85-residue stretch at 360–444 (IKIGTNELTR…PIRLEFKSGT (85 aa)) folds into the KH-like domain.

This sequence belongs to the TRAFAC class TrmE-Era-EngA-EngB-Septin-like GTPase superfamily. EngA (Der) GTPase family. Associates with the 50S ribosomal subunit.

In terms of biological role, GTPase that plays an essential role in the late steps of ribosome biogenesis. The sequence is that of GTPase Der from Alcanivorax borkumensis (strain ATCC 700651 / DSM 11573 / NCIMB 13689 / SK2).